The primary structure comprises 730 residues: ABC transporter G family member 3 (730 aa).

Over residues 1-28 (MEEIQSQSDLYRSSSSSASSPTSRVPSS) the composition is skewed to low complexity. Residues 1-100 (MEEIQSQSDL…MASPPVPEGG (100 aa)) form a disordered region. Residues 47 to 56 (DSPEWEDTPD) are compositionally biased toward acidic residues. The segment covering 72-91 (NDATTTPVSPSLSKMNSGSM) has biased composition (polar residues). Residue S93 is modified to Phosphoserine. The ABC transporter domain occupies 114–356 (IAWKDLTVTM…FSNAGFPCPI (243 aa)). Residue 151-158 (GPAKSGKS) coordinates ATP. An ABC transmembrane type-2 domain is found at 441-653 (TRVAVLTWRS…SIEGLLENEY (213 aa)). 6 helical membrane passes run 465–485 (LILYMILTLSIGTLYSGLGHS), 495–515 (AVFVFVSFASLLGIAGIPSLL), 532–552 (AFVFLLGQFLGSIPFLFLMSI), 575–595 (VLNFFMCLLVNEGLMLFIACI), 600–620 (YWSTLTLISVHVIMMLAAGHF), and 689–709 (MLVLLAMAFGYRLLVYVLLRF).

Belongs to the ABC transporter superfamily. ABCG family. Eye pigment precursor importer (TC 3.A.1.204) subfamily.

It is found in the membrane. This Arabidopsis thaliana (Mouse-ear cress) protein is ABC transporter G family member 3 (ABCG3).